Here is a 127-residue protein sequence, read N- to C-terminus: Small ribosomal subunit protein eS8 (127 aa).

The tract at residues 1-24 (MKWQGKSARKPTGGRLVPARGKRK) is disordered.

This sequence belongs to the eukaryotic ribosomal protein eS8 family. In terms of assembly, part of the 30S ribosomal subunit.

The sequence is that of Small ribosomal subunit protein eS8 from Methanothrix thermoacetophila (strain DSM 6194 / JCM 14653 / NBRC 101360 / PT) (Methanosaeta thermophila).